A 303-amino-acid chain; its full sequence is Cyclin-dependent kinase B1-1 (303 aa).

Positions 4-295 (YEKLEKVGEG…AKAAMEHPYF (292 aa)) constitute a Protein kinase domain. Residues 10–18 (VGEGTYGKV) and K33 contribute to the ATP site. T14 is modified (phosphothreonine). Residue Y15 is modified to Phosphotyrosine. D136 acts as the Proton acceptor in catalysis. Phosphothreonine is present on T170.

Belongs to the protein kinase superfamily. CMGC Ser/Thr protein kinase family. CDC2/CDKX subfamily. As to expression, expressed in actively dividing cells: root and shoot apical meristems, and young leaves.

It carries out the reaction L-seryl-[protein] + ATP = O-phospho-L-seryl-[protein] + ADP + H(+). The enzyme catalyses L-threonyl-[protein] + ATP = O-phospho-L-threonyl-[protein] + ADP + H(+). It catalyses the reaction [DNA-directed RNA polymerase] + ATP = phospho-[DNA-directed RNA polymerase] + ADP + H(+). This is Cyclin-dependent kinase B1-1 (CDKB1-1) from Oryza sativa subsp. japonica (Rice).